A 253-amino-acid chain; its full sequence is HTH-type transcriptional regulator YdeO (253 aa).

The HTH araC/xylS-type domain occupies 137-233; that stretch reads GKVRNIVNMK…GNSPKRVSKE (97 aa). DNA-binding regions (H-T-H motif) lie at residues 154-175 and 200-223; these read KDIC…KQEQ and VNKI…RKHF.

Its function is as follows. Induces the expression of gadE and mdtEF. Could also regulate the expression of other genes involved in acid resistance. The chain is HTH-type transcriptional regulator YdeO from Escherichia coli O157:H7.